Here is a 1077-residue protein sequence, read N- to C-terminus: ATP-dependent helicase/deoxyribonuclease subunit B (1077 aa).

The protein belongs to the helicase family. AddB/RexB type 2 subfamily. In terms of assembly, heterodimer of AddA and RexB. Mg(2+) is required as a cofactor.

The heterodimer acts as both an ATP-dependent DNA helicase and an ATP-dependent, dual-direction single-stranded exonuclease. Recognizes the chi site generating a DNA molecule suitable for the initiation of homologous recombination. This subunit has 5' -&gt; 3' nuclease activity but not helicase activity. The chain is ATP-dependent helicase/deoxyribonuclease subunit B from Streptococcus agalactiae serotype Ia (strain ATCC 27591 / A909 / CDC SS700).